We begin with the raw amino-acid sequence, 186 residues long: ATP synthase subunit delta, cyanelle (186 aa).

Belongs to the ATPase delta chain family. F-type ATPases have 2 components, F(1) - the catalytic core - and F(0) - the membrane proton channel. F(1) has five subunits: alpha(3), beta(3), gamma(1), delta(1), epsilon(1). CF(0) has four main subunits: a(1), b(1), b'(1) and c(10-14). The alpha and beta chains form an alternating ring which encloses part of the gamma chain. F(1) is attached to F(0) by a central stalk formed by the gamma and epsilon chains, while a peripheral stalk is formed by the delta, b and b' chains.

It localises to the plastid. The protein localises to the cyanelle thylakoid membrane. Its function is as follows. F(1)F(0) ATP synthase produces ATP from ADP in the presence of a proton or sodium gradient. F-type ATPases consist of two structural domains, F(1) containing the extramembraneous catalytic core and F(0) containing the membrane proton channel, linked together by a central stalk and a peripheral stalk. During catalysis, ATP synthesis in the catalytic domain of F(1) is coupled via a rotary mechanism of the central stalk subunits to proton translocation. This protein is part of the stalk that links CF(0) to CF(1). It either transmits conformational changes from CF(0) to CF(1) or is implicated in proton conduction. The chain is ATP synthase subunit delta, cyanelle from Cyanophora paradoxa.